Consider the following 165-residue polypeptide: RxLR effector protein CRE12 (165 aa).

An N-terminal signal peptide occupies residues 1–23 (MRLAAFVLVAVAFAIIPDGRVSA). A RxLR-dEER motif is present at residues 40–59 (RLLRLNAVPQPVETGNQEER).

Belongs to the RxLR effector family.

Its subcellular location is the secreted. The protein resides in the host cell. Effector that is involved in host plant infection. Contributes to virulence during the early infection stage, by inhibiting plant defense responses induced by both PAMP-triggered immunity (PTI) and effector-triggered immunity (ETI). This chain is RxLR effector protein CRE12, found in Phytophthora infestans (strain T30-4) (Potato late blight agent).